Reading from the N-terminus, the 135-residue chain is Endoribonuclease YbeY (135 aa).

Positions 94, 98, and 104 each coordinate Zn(2+).

This sequence belongs to the endoribonuclease YbeY family. Requires Zn(2+) as cofactor.

It localises to the cytoplasm. In terms of biological role, single strand-specific metallo-endoribonuclease involved in late-stage 70S ribosome quality control and in maturation of the 3' terminus of the 16S rRNA. This Campylobacter jejuni subsp. jejuni serotype O:2 (strain ATCC 700819 / NCTC 11168) protein is Endoribonuclease YbeY.